A 166-amino-acid chain; its full sequence is KH homology domain-containing protein 1C (166 aa).

The KH; atypical domain maps to 19–78; that stretch reads PLVFDMEEDKEDYIFGPHDEYLHTLEVHSNTLIQLERWFTPTGQTRVTVVGPLKARLWVM.

It belongs to the KHDC1 family.

This Mus musculus (Mouse) protein is KH homology domain-containing protein 1C (Khdc1c).